Reading from the N-terminus, the 461-residue chain is Photosystem II CP43 reaction center protein (461 aa).

A propeptide spanning residues 1-2 is cleaved from the precursor; the sequence is ME. Thr-3 is modified (N-acetylthreonine). Thr-3 is modified (phosphothreonine). Helical transmembrane passes span 57–81, 122–143, 166–188, 243–263, and 279–300; these read LFEVAHFVPEKPMYEQGLILLPHLA, LIGPETLEETFPFFGYTWKDKN, KAMYFGGVYDTWAPGGGDTRIIT, QPWAWTRRAFVWSGEAYLSYS, and WFNNTAYPSEFYGPTGPEASQS. Glu-355 is a [CaMn4O5] cluster binding site. A helical membrane pass occupies residues 435–459; sequence RARAAAAGFEKGIDRLTEPVLSLKP.

Belongs to the PsbB/PsbC family. PsbC subfamily. PSII is composed of 1 copy each of membrane proteins PsbA, PsbB, PsbC, PsbD, PsbE, PsbF, PsbH, PsbI, PsbJ, PsbK, PsbL, PsbM, PsbT, PsbX, PsbY, PsbZ, Psb30/Ycf12, at least 3 peripheral proteins of the oxygen-evolving complex and a large number of cofactors. It forms dimeric complexes. The cofactor is Binds multiple chlorophylls and provides some of the ligands for the Ca-4Mn-5O cluster of the oxygen-evolving complex. It may also provide a ligand for a Cl- that is required for oxygen evolution. PSII binds additional chlorophylls, carotenoids and specific lipids..

It is found in the plastid. The protein resides in the chloroplast thylakoid membrane. Its function is as follows. One of the components of the core complex of photosystem II (PSII). It binds chlorophyll and helps catalyze the primary light-induced photochemical processes of PSII. PSII is a light-driven water:plastoquinone oxidoreductase, using light energy to abstract electrons from H(2)O, generating O(2) and a proton gradient subsequently used for ATP formation. This Stigeoclonium helveticum (Green alga) protein is Photosystem II CP43 reaction center protein.